The following is a 684-amino-acid chain: Chaperone protein HtpG (684 aa).

Positions 1–329 are a; substrate-binding; that stretch reads MSKKGTIGVT…SPDIPLNVSR (329 aa). Positions 330 to 548 are b; sequence SYLQSDANVK…FMRRMRDMAQ (219 aa). Positions 549–684 are c; that stretch reads LQPGMSFYGE…EFIRRSQRLL (136 aa).

This sequence belongs to the heat shock protein 90 family. In terms of assembly, homodimer.

Its subcellular location is the cytoplasm. Functionally, molecular chaperone. Has ATPase activity. This chain is Chaperone protein HtpG, found in Porphyromonas gingivalis (strain ATCC BAA-308 / W83).